We begin with the raw amino-acid sequence, 466 residues long: Ribulose bisphosphate carboxylase (466 aa).

Position 111 (Asn-111) interacts with substrate. The active-site Proton acceptor is the Lys-166. Lys-168 serves as a coordination point for substrate. Mg(2+) is bound by residues Lys-191, Asp-193, and Glu-194. Lys-191 is subject to N6-carboxylysine. His-287 acts as the Proton acceptor in catalysis. The substrate site is built by Arg-288, His-321, and Ser-368.

This sequence belongs to the RuBisCO large chain family. Type II subfamily. As to quaternary structure, homodimer. The cofactor is Mg(2+).

The catalysed reaction is 2 (2R)-3-phosphoglycerate + 2 H(+) = D-ribulose 1,5-bisphosphate + CO2 + H2O. The enzyme catalyses D-ribulose 1,5-bisphosphate + O2 = 2-phosphoglycolate + (2R)-3-phosphoglycerate + 2 H(+). Its function is as follows. RuBisCO catalyzes two reactions: the carboxylation of D-ribulose 1,5-bisphosphate, the primary event in carbon dioxide fixation, as well as the oxidative fragmentation of the pentose substrate. Both reactions occur simultaneously and in competition at the same active site. The sequence is that of Ribulose bisphosphate carboxylase from Rhodospirillum rubrum (strain ATCC 11170 / ATH 1.1.1 / DSM 467 / LMG 4362 / NCIMB 8255 / S1).